A 56-amino-acid chain; its full sequence is Attractin (56 aa).

Intrachain disulfides connect C4–C41, C13–C33, and C20–C26.

Produced by the albumen gland of the egg cordons.

Its subcellular location is the secreted. Its function is as follows. Water-borne pheromone that attract the marine mollusk Aplysia into breeding aggregations and coordinate male and female reproductive behavior within the aggregation. This is Attractin (ATT) from Aplysia vaccaria (California black sea hare).